The primary structure comprises 359 residues: UDP-N-acetylglucosamine--N-acetylmuramyl-(pentapeptide) pyrophosphoryl-undecaprenol N-acetylglucosamine transferase (359 aa).

UDP-N-acetyl-alpha-D-glucosamine-binding positions include 14–16 (TGG), Asn-126, Arg-166, Ser-194, Ile-248, and Gln-293.

The protein belongs to the glycosyltransferase 28 family. MurG subfamily.

The protein localises to the cell inner membrane. The catalysed reaction is di-trans,octa-cis-undecaprenyl diphospho-N-acetyl-alpha-D-muramoyl-L-alanyl-D-glutamyl-meso-2,6-diaminopimeloyl-D-alanyl-D-alanine + UDP-N-acetyl-alpha-D-glucosamine = di-trans,octa-cis-undecaprenyl diphospho-[N-acetyl-alpha-D-glucosaminyl-(1-&gt;4)]-N-acetyl-alpha-D-muramoyl-L-alanyl-D-glutamyl-meso-2,6-diaminopimeloyl-D-alanyl-D-alanine + UDP + H(+). Its pathway is cell wall biogenesis; peptidoglycan biosynthesis. In terms of biological role, cell wall formation. Catalyzes the transfer of a GlcNAc subunit on undecaprenyl-pyrophosphoryl-MurNAc-pentapeptide (lipid intermediate I) to form undecaprenyl-pyrophosphoryl-MurNAc-(pentapeptide)GlcNAc (lipid intermediate II). This Verminephrobacter eiseniae (strain EF01-2) protein is UDP-N-acetylglucosamine--N-acetylmuramyl-(pentapeptide) pyrophosphoryl-undecaprenol N-acetylglucosamine transferase.